The following is a 591-amino-acid chain: V-type ATP synthase alpha chain (591 aa).

Residue Gly242–Thr249 coordinates ATP.

It belongs to the ATPase alpha/beta chains family.

The catalysed reaction is ATP + H2O + 4 H(+)(in) = ADP + phosphate + 5 H(+)(out). Produces ATP from ADP in the presence of a proton gradient across the membrane. The V-type alpha chain is a catalytic subunit. The sequence is that of V-type ATP synthase alpha chain (atpA) from Chlamydia pneumoniae (Chlamydophila pneumoniae).